A 196-amino-acid chain; its full sequence is PRADC1-like protein (196 aa).

The first 18 residues, 1–18 (MLIAWLVLAATLSRSIRA), serve as a signal peptide directing secretion. In terms of domain architecture, PA spans 73–171 (ITDPPGACQE…STLQRLKRVH (99 aa)). Asparagine 179 carries an N-linked (GlcNAc...) asparagine glycan.

Its subcellular location is the secreted. In terms of biological role, may be involved in iversification of muscle cell fates. The protein is PRADC1-like protein of Drosophila melanogaster (Fruit fly).